A 209-amino-acid chain; its full sequence is MVKVNIIFYSMYGHVYRMAEAVAAGAREVEGAEVGIYQVPETLPEEVLEKMGAIETKKLFAHIPVLTREMNEEVLAGADALIFGTPTRYGNMTAQMRAVLDGLGGLWNRDAFVGKVGSVFTSSGTQHGGQESTILTFHVTLLHLGMILVGLPYSEKRQTRMDEITGGSPYGVSTIAGGDGSRQPSENELAMARYQGRHVTLIAKKIAGK.

A Flavodoxin-like domain is found at 4-199 (VNIIFYSMYG…AMARYQGRHV (196 aa)). Residues 10-15 (SMYGHV) and 87-89 (TRY) contribute to the FMN site. Residue Y12 coordinates NAD(+). W107 lines the substrate pocket. FMN is bound by residues 122–128 (SSGTQHG) and H143.

The protein belongs to the WrbA family. FMN serves as cofactor.

The enzyme catalyses a quinone + NADH + H(+) = a quinol + NAD(+). The catalysed reaction is a quinone + NADPH + H(+) = a quinol + NADP(+). This is NAD(P)H dehydrogenase (quinone) from Methanosarcina acetivorans (strain ATCC 35395 / DSM 2834 / JCM 12185 / C2A).